A 287-amino-acid chain; its full sequence is D-alanine--D-alanine ligase (287 aa).

Residues 98-283 (KTKQIAQSVG…FDDVVRITVE (186 aa)) enclose the ATP-grasp domain. Residue 124 to 169 (PVIIKPVDEGSSKGLFLCNNKEEAEEAVKKLAKPIIEDYIIGEELT) participates in ATP binding. Aspartate 238, glutamate 250, and asparagine 252 together coordinate Mg(2+).

This sequence belongs to the D-alanine--D-alanine ligase family. It depends on Mg(2+) as a cofactor. Requires Mn(2+) as cofactor.

Its subcellular location is the cytoplasm. It carries out the reaction 2 D-alanine + ATP = D-alanyl-D-alanine + ADP + phosphate + H(+). Its pathway is cell wall biogenesis; peptidoglycan biosynthesis. Functionally, cell wall formation. In Fusobacterium nucleatum subsp. nucleatum (strain ATCC 25586 / DSM 15643 / BCRC 10681 / CIP 101130 / JCM 8532 / KCTC 2640 / LMG 13131 / VPI 4355), this protein is D-alanine--D-alanine ligase.